The primary structure comprises 927 residues: MVQMTRRGFLLASGATLLGSSLSFRTLAAAADLSGAFEYSGWENFHRAQWSWDKKTRGAHLINCTGACPHFVYSKEGVVIREEQSKDIAPMTGIPEYNPRGCNKGECAHDYMYGPHRLKYPLIRVGERGEGKWRRASWDEALDMIADKVVDTIKNHAPDCISVYSPVPAVAPVSFSAGHRFAHYIGAHTHTFFDWYGDHPTGQTQTCGVQGDTAETADWFNSKYIILWGANPTQTRIPDAHFLSEAQLNGTKIVSIAPDFNSSAIKVDKWIHPQPGTDGALALSMAHVIIKEKLYDAHNLKEQTDLSYLVRSDTKRFLREADVVAGGSKDKFYLWDVRTGKPVIPKGCWGDQPEQKAPPVAFMGRNTNTFPKGYIDLGDIDPALEGKFKIQLLDGKSIEVRPVFEILKSRIMADNTPEKAAKITGVPAKSITELAREYATAKPSMIICGGGTQHWYYSDVLLRAMHLLTALTGSEGKNGGGLNHYIGQWKPTFLPGLVALAFPEGPAKQRFCQTTIWTYIHAEVNDQILNSDVDTEKYLREAFASRQMPNLPRDGRDPKVFIIYRGNWLNQAKGQKYVLRNLWPKLELVVDINIRMDSTALYSDVVLPSAHWYEKLDLNVTEEHTFINMTEPAIKPMWESKTDWQIFLALSKRVEMAANRKGYQKFNDEQFKWVRNLSNLWNQMTMDGKLAEDAAAAQYILDNAPHSKGITLDMLREKPQRFKANWTSSMKEGVPYTPFQNFVVDKKPWPTLTGRQQFYLDHETFFDMGVELPVYKAPIDADKYPFRFNSPHSRHSIHSTFKDSVLMLRLQRGGPSIDISSIDAKTLGIKDNDWVEVWNDHGKVICRVKIRSGEQRGRVSMWHTPELYMDLIEGGSQSVCPVRITPTHLVGNYGHLVFRPNYYGPGGTQRDVRVNMKRYIGATPMSF.

The tat-type signal signal peptide spans 1-31 (MVQMTRRGFLLASGATLLGSSLSFRTLAAAA). The 64-residue stretch at 53 to 116 (DKKTRGAHLI…CAHDYMYGPH (64 aa)) folds into the 4Fe-4S Mo/W bis-MGD-type domain. [4Fe-4S] cluster-binding residues include histidine 60, cysteine 64, cysteine 68, and cysteine 102. Aspartate 198 contacts Mo-bis(molybdopterin guanine dinucleotide).

The protein belongs to the prokaryotic molybdopterin-containing oxidoreductase family. As to quaternary structure, heterotrimer of alpha, beta and gamma subunits. Requires [4Fe-4S] cluster as cofactor. Mo-bis(molybdopterin guanine dinucleotide) serves as cofactor. Predicted to be exported by the Tat system. The position of the signal peptide cleavage has not been experimentally proven.

The protein resides in the periplasm. Component of the perchlorate reductase that catalyzes the reduction of perchlorate to chlorite and allows anaerobic growth on perchlorate as the sole electron acceptor. Is probably also able to reduce chlorate to chlorite. The alpha subunit is likely the catalytic subunit. This chain is Perchlorate reductase subunit alpha (pcrA), found in Dechloromonas aromatica (strain RCB).